Reading from the N-terminus, the 267-residue chain is MTFSPPDLSRVPGVLGRIVTEREADYRNADASLGEARAPHRRFEQALRLSPDDRGARLALIAEVKQASPSEGAIAALDPAQAARAYAEGGAAAISCLTEPRHFGGSPEALRAVVAASEVPVLRKDFVVHPAMLREAAEWGAGAALLMVSVLGERLPEFLAMTEHLGLDALVEVHDERELDIALAAGPRILGINNRDLTTLKIDLGVSPHLMARARAAGFSGVLVAESGYRAPADLREVYGLADAVLVGTSLAGSGDLAGAARALLAR.

Belongs to the TrpC family.

It carries out the reaction 1-(2-carboxyphenylamino)-1-deoxy-D-ribulose 5-phosphate + H(+) = (1S,2R)-1-C-(indol-3-yl)glycerol 3-phosphate + CO2 + H2O. It participates in amino-acid biosynthesis; L-tryptophan biosynthesis; L-tryptophan from chorismate: step 4/5. The sequence is that of Indole-3-glycerol phosphate synthase from Deinococcus radiodurans (strain ATCC 13939 / DSM 20539 / JCM 16871 / CCUG 27074 / LMG 4051 / NBRC 15346 / NCIMB 9279 / VKM B-1422 / R1).